The primary structure comprises 554 residues: (Z)-gamma-bisabolene synthase 1 (554 aa).

Mg(2+)-binding residues include D306, D310, D450, and D458. A DDXXD motif motif is present at residues 306–310; it reads DDACD.

It belongs to the terpene synthase family. Tpsa subfamily. It depends on Mg(2+) as a cofactor. Mn(2+) is required as a cofactor. In terms of tissue distribution, predominantly expressed in roots. Expressed in the cortex and the sub-epidermal layers of roots. Also detected in leaf hydathodes and flower stigmata.

The protein localises to the cytoplasm. The catalysed reaction is (2E,6E)-farnesyl diphosphate = (Z)-gamma-bisabolene + diphosphate. The protein operates within secondary metabolite biosynthesis; terpenoid biosynthesis. In terms of biological role, involved in sesquiterpene (C15) biosynthesis. The major product is (Z)-gamma-bisabolene with minor amounts of (E)-nerolidol and alpha-bisabolol. This is (Z)-gamma-bisabolene synthase 1 (TPS12) from Arabidopsis thaliana (Mouse-ear cress).